A 554-amino-acid polypeptide reads, in one-letter code: MLO-like protein 14 (554 aa).

Residues 1–13 are Extracellular-facing; that stretch reads MREETEPSERTLG. A helical transmembrane segment spans residues 14–34; sequence LTPTWSVATVLTIFVFVSLIV. The Cytoplasmic portion of the chain corresponds to 35–63; sequence ERSIHRLSNWLQKTKRKPLFAALEKMKEE. The chain crosses the membrane as a helical span at residues 64-84; sequence LMLLGFISLLLTATSSTIANI. Over 85–158 the chain is Extracellular; sequence CVSSSFHNDR…SYEGMEQLHR (74 aa). Residues 159 to 179 form a helical membrane-spanning segment; that stretch reads FIFIMAVTHVTYSCLTMLLAI. Topologically, residues 180–281 are cytoplasmic; that stretch reads VKIHRWRIWE…MIRSMEEEFQ (102 aa). A helical membrane pass occupies residues 282-302; that stretch reads KIVGVSGPLWGFVVGFMLFNI. A topological domain (extracellular) is located at residue Lys303. The chain crosses the membrane as a helical span at residues 304–324; sequence GSNLYFWLAIIPITLVLLVGA. Residues 325–366 are Cytoplasmic-facing; it reads KLQHVIATLALENASITEYASGIKLRPRDELFWFKKPELLLS. Residues 367 to 387 form a helical membrane-spanning segment; sequence LIHFIQFQNAFELASFFWFWW. The Extracellular portion of the chain corresponds to 388–406; the sequence is QFGYNSCFLRNHLLVYLRL. The helical transmembrane segment at 407-427 threads the bilayer; that stretch reads ILGFSGQFLCSYSTLPLYALV. At 428–554 the chain is on the cytoplasmic side; sequence TQMGTNYKAA…SSSLPMRREC (127 aa). The calmodulin-binding stretch occupies residues 441-462; the sequence is QRVRETINGWGKATRRKRRHGL.

The protein belongs to the MLO family.

It is found in the membrane. Its function is as follows. May be involved in modulation of pathogen defense and leaf cell death. Activity seems to be regulated by Ca(2+)-dependent calmodulin binding and seems not to require heterotrimeric G proteins. This Arabidopsis thaliana (Mouse-ear cress) protein is MLO-like protein 14 (MLO14).